The following is a 184-amino-acid chain: MKPLVIKFAWPLPLLLLLLLPPKLQGNYWDFGEYELNPEVRDFIREYESTGPTKPPTVKRIIEMITIGDQPFNDYDYCNTELRTKQIHYKGRCYPEHYIAGVPYGELVKACDGEEVQCKNGVKSCRRSMNLIEGVRCVLETGQQMTNCTYKTILMIGYPVVSCQWDEETKIFIPDHIYNMSLPK.

Positions 1–25 (MKPLVIKFAWPLPLLLLLLLPPKLQ) are cleaved as a signal peptide. 3 disulfides stabilise this stretch: Cys93–Cys148, Cys111–Cys163, and Cys118–Cys125. Residues Asn147 and Asn179 are each glycosylated (N-linked (GlcNAc...) asparagine).

Belongs to the pancreatic ribonuclease family.

Its subcellular location is the secreted. Functionally, does not exhibit any ribonuclease activity. The protein is Inactive ribonuclease-like protein 9 (Rnase9) of Mus musculus (Mouse).